The primary structure comprises 117 residues: UPF0251 protein cbdbA217 (117 aa).

The protein belongs to the UPF0251 family.

The chain is UPF0251 protein cbdbA217 from Dehalococcoides mccartyi (strain CBDB1).